Consider the following 90-residue polypeptide: Probable Fe(2+)-trafficking protein (90 aa).

It belongs to the Fe(2+)-trafficking protein family.

In terms of biological role, could be a mediator in iron transactions between iron acquisition and iron-requiring processes, such as synthesis and/or repair of Fe-S clusters in biosynthetic enzymes. This chain is Probable Fe(2+)-trafficking protein, found in Pseudomonas aeruginosa (strain UCBPP-PA14).